We begin with the raw amino-acid sequence, 235 residues long: Peroxisomal membrane protein 11C (235 aa).

Residues 1–91 are Cytoplasmic-facing; it reads MSTLETTRAE…LPLVLLGKSK (91 aa). The helical transmembrane segment at 92 to 108 threads the bilayer; that stretch reads NALLSTFLFLDQIVWLG. Topologically, residues 109–206 are lumenal; the sequence is RTGIYKDKER…LLQLAPKKVT (98 aa). A helical membrane pass occupies residues 207–226; sequence PRVTGAFGFASSLISCYQLL. Residues 227–235 lie on the Cytoplasmic side of the membrane; sequence PSHPKSKMV.

Belongs to the peroxin-11 family. In terms of assembly, homooligomer. Interacts with ARC5 and FIS1B on peroxisomes. As to expression, expressed in roots and developing siliques.

The protein localises to the peroxisome membrane. Functionally, involved in peroxisomal proliferation. Promotes peroxisomal duplication, aggregation or elongation without fission. The sequence is that of Peroxisomal membrane protein 11C (PEX11C) from Arabidopsis thaliana (Mouse-ear cress).